The sequence spans 212 residues: Protein irg-1 (212 aa).

Expressed in the intestine.

Plays a role in innate immunity by conferring resistance to virulent strains of the Gram-negative bacterium P.aeruginosa via the zip-2 pathway. Can act independently of several immunity-related pathways including pmk-1 p38MAPK, dbl-1 TGF-beta, kgb-1 JNK and bar-1/beta-catenin pathways. In Caenorhabditis elegans, this protein is Protein irg-1.